The chain runs to 127 residues: MGKAAAPRALPENEAKAVARMLRVSPQKLNLVAQLIRGKKVATALADLQFSQKRIAVEVKKCLESAIANAENNHDLDVDDLVVKEAYVGKALVLKRFHARARGRGARILKPFSNLTIVVREVRAEAA.

Belongs to the universal ribosomal protein uL22 family. Part of the 50S ribosomal subunit.

In terms of biological role, this protein binds specifically to 23S rRNA; its binding is stimulated by other ribosomal proteins, e.g. L4, L17, and L20. It is important during the early stages of 50S assembly. It makes multiple contacts with different domains of the 23S rRNA in the assembled 50S subunit and ribosome. Functionally, the globular domain of the protein is located near the polypeptide exit tunnel on the outside of the subunit, while an extended beta-hairpin is found that lines the wall of the exit tunnel in the center of the 70S ribosome. The chain is Large ribosomal subunit protein uL22 from Methylobacterium nodulans (strain LMG 21967 / CNCM I-2342 / ORS 2060).